We begin with the raw amino-acid sequence, 60 residues long: UPF0434 protein NMA0874 (60 aa).

This sequence belongs to the UPF0434 family.

In Neisseria meningitidis serogroup A / serotype 4A (strain DSM 15465 / Z2491), this protein is UPF0434 protein NMA0874.